Reading from the N-terminus, the 424-residue chain is Histidine--tRNA ligase (424 aa).

This sequence belongs to the class-II aminoacyl-tRNA synthetase family. Homodimer.

The protein localises to the cytoplasm. It carries out the reaction tRNA(His) + L-histidine + ATP = L-histidyl-tRNA(His) + AMP + diphosphate + H(+). This Klebsiella pneumoniae (strain 342) protein is Histidine--tRNA ligase.